Reading from the N-terminus, the 333-residue chain is Biotin synthase (333 aa).

One can recognise a Radical SAM core domain in the interval 54–287; the sequence is ANHGAIHACS…TKIIKFAAGR (234 aa). Residues C72, C76, and C79 each coordinate [4Fe-4S] cluster. [2Fe-2S] cluster is bound by residues C151, C212, and K282.

It belongs to the radical SAM superfamily. Biotin synthase family. As to quaternary structure, homodimer. Requires [4Fe-4S] cluster as cofactor. [2Fe-2S] cluster is required as a cofactor.

It catalyses the reaction (4R,5S)-dethiobiotin + (sulfur carrier)-SH + 2 reduced [2Fe-2S]-[ferredoxin] + 2 S-adenosyl-L-methionine = (sulfur carrier)-H + biotin + 2 5'-deoxyadenosine + 2 L-methionine + 2 oxidized [2Fe-2S]-[ferredoxin]. The protein operates within cofactor biosynthesis; biotin biosynthesis; biotin from 7,8-diaminononanoate: step 2/2. Catalyzes the conversion of dethiobiotin (DTB) to biotin by the insertion of a sulfur atom into dethiobiotin via a radical-based mechanism. The polypeptide is Biotin synthase (Chlorobaculum tepidum (strain ATCC 49652 / DSM 12025 / NBRC 103806 / TLS) (Chlorobium tepidum)).